The chain runs to 552 residues: Steroid transmembrane transporter SLC22A24 (552 aa).

12 consecutive transmembrane segments (helical) span residues Phe16–Leu36, Ser146–Leu166, Met174–Pro194, Phe204–Trp224, Thr235–Ile255, Thr260–Val280, Ile349–Phe369, Leu380–Met400, Ile407–Asp427, Ile436–Phe456, Ile473–Ser493, and Tyr495–Leu515.

The protein belongs to the major facilitator (TC 2.A.1) superfamily. Organic cation transporter (TC 2.A.1.19) family.

The protein localises to the cell membrane. The catalysed reaction is estrone 3-sulfate(out) + glutarate(in) = estrone 3-sulfate(in) + glutarate(out). The enzyme catalyses 17beta-estradiol 17-O-(beta-D-glucuronate)(out) + glutarate(in) = 17beta-estradiol 17-O-(beta-D-glucuronate)(in) + glutarate(out). It catalyses the reaction 5alpha-androstane-3alpha,17beta-diol 3-O-(beta-D-glucuronate)(out) + glutarate(in) = 5alpha-androstane-3alpha,17beta-diol 3-O-(beta-D-glucuronate)(in) + glutarate(out). It carries out the reaction dehydroepiandrosterone 3-sulfate(out) + glutarate(in) = dehydroepiandrosterone 3-sulfate(in) + glutarate(out). The catalysed reaction is glutarate(in) + succinate(out) = glutarate(out) + succinate(in). Functionally, renal transmembrane organic anion/dicarboxylate exchanger that participates in the reabsorption of conjugated steroids, as well as bile acids, driven by an outward gradient of dicarboxylates such as glutarate or succinate. Transports androstanediol glucuronide (5alpha-androstane-3alpha,17beta-diol 3-O-(beta-D-glucuronate)), estrone 3-sulfate, and estradiol-17-glucuronide (17beta-estradiol 17-O-(beta-D-glucuronate)), but not taurocholate. The chain is Steroid transmembrane transporter SLC22A24 from Microcebus murinus (Gray mouse lemur).